A 147-amino-acid polypeptide reads, in one-letter code: Diaminohydroxyphosphoribosylamino-pyrimidine deaminase (147 aa).

The CMP/dCMP-type deaminase domain maps to 1–122 (MKDRFYMTRA…LYLRKKGISV (122 aa)). His-50 contributes to the Zn(2+) binding site. Catalysis depends on Glu-52, which acts as the Proton donor. Zn(2+)-binding residues include Cys-75 and Cys-84.

The protein belongs to the cytidine and deoxycytidylate deaminase family. Requires Zn(2+) as cofactor.

It carries out the reaction 2,5-diamino-6-hydroxy-4-(5-phosphoribosylamino)-pyrimidine + H2O + H(+) = 5-amino-6-(5-phospho-D-ribosylamino)uracil + NH4(+). Its pathway is cofactor biosynthesis; riboflavin biosynthesis; 5-amino-6-(D-ribitylamino)uracil from GTP: step 2/4. The sequence is that of Diaminohydroxyphosphoribosylamino-pyrimidine deaminase (ribD1) from Buchnera aphidicola subsp. Schizaphis graminum (strain Sg).